A 309-amino-acid chain; its full sequence is uncharacterized protein (309 aa).

This sequence belongs to the OprB family.

This is an uncharacterized protein from Aquifex aeolicus (strain VF5).